The primary structure comprises 770 residues: ARF GTPase-activating protein GIT1 (770 aa).

The Arf-GAP domain maps to 1–124 (MSRKGPRAEV…AFVHKLPCRD (124 aa)). The interaction with gamma-tubulin and localization to the centrosome stretch occupies residues 1-124 (MSRKGPRAEV…AFVHKLPCRD (124 aa)). The C4-type zinc finger occupies 11–34 (CADCSAPDPGWASISRGVLVCDEC). ANK repeat units follow at residues 132–161 (DLSK…QANF), 166–195 (KGTT…DPGS), and 199–228 (NGRT…ELTD). Residue Y224 is modified to Phosphotyrosine. The tract at residues 245–374 (HYIIPQMADR…QGKSLSSPTD (130 aa)) is interaction with PCLO. The tract at residues 253-424 (DRSRQKCMSQ…NRARSMDSSD (172 aa)) is interaction with PTK2/FAK1. The interaction with ARHGEF7 stretch occupies residues 254–376 (RSRQKCMSQS…KSLSSPTDNL (123 aa)). The disordered stretch occupies residues 363–425 (RQQGKSLSSP…RARSMDSSDL (63 aa)). Residues 366–383 (GKSLSSPTDNLELSARNQ) show a composition bias toward polar residues. 2 positions are modified to phosphoserine: S368 and S371. T373 carries the phosphothreonine modification. Residues 375-596 (NLELSARNQS…QEGSRHASKL (222 aa)) form an interaction with NCK2 and GRIN3A region. The interval 375–596 (NLELSARNQS…QEGSRHASKL (222 aa)) is required for localization at synapses. Residues S379 and S384 each carry the phosphoserine modification. Y392 is subject to Phosphotyrosine. S394 and S397 each carry phosphoserine. Residues 394–403 (SVASDEDTDQ) are compositionally biased toward acidic residues. T401 is subject to Phosphothreonine. A phosphoserine mark is found at S419, S422, and S426. The interval 420 to 475 (MDSSDLSDGAVTLQEYLELKKALATSEAKVQQLMKVNSSLSDELRKLQREIHKLQA) is interaction with MAPK1. Positions 429–629 (AVTLQEYLEL…EGKRFLELSK (201 aa)) are interaction with IKBKG. The stretch at 449–483 (VQQLMKVNSSLSDELRKLQREIHKLQAENLQLRQP) forms a coiled coil. Phosphoserine occurs at positions 507 and 545. The residue at position 546 (T546) is a Phosphothreonine. Phosphotyrosine occurs at positions 554 and 563. S570, S580, S601, and S605 each carry phosphoserine. Positions 574–586 (VTFTPSSPLLSSS) are enriched in low complexity. The tract at residues 574 to 615 (VTFTPSSPLLSSSQEGSRHASKLSRHGSGAESDYENTQSGEP) is disordered. At T610 the chain carries Phosphothreonine. Residue S639 is modified to Phosphoserine. The segment at 646–770 (PGLPSTEDVI…VTITTREKKQ (125 aa)) is interaction with PXN and TGFB1I1.

In terms of assembly, forms homodimers and possibly oligomers. May form heterooligomers with GIT2. Interacts with G protein-coupled receptor kinases, including GRK2, GRK3, GRK5 and GRK6. Interacts with PPFIA1, PPFIA2 and PPFIA4. Interacts with GRIP1 and forms a ternary complex with PPFIA1 and GRIP1. Directly interacts with ARHGEF7/beta-PIX, forming in vitro a heptameric complex made of a GIT1 dimer and an ARHGEF7 trimer. Directly interacts with PXN/paxillin; this interaction is enhanced in the presence of ARHGEF7. Directly interacts (via C-terminus) with TGFB1I1/Hic-5 (via LD motif 3). Directly interacts with PTK2/FAK1. May interact with PTK2B/PYK2; this interaction may be indirect. Interacts with AMPA receptors GRIA2/3. Directly interacts with protein Piccolo/PCLO. Forms a complex with Ephrin-B1/EFNB1 and NCK2/GRB4 (via SH2); this interaction is important for spine morphogenesis and synapse formation. Interaction with NCK2 is transient and depends upon GIT1 phosphorylation at Tyr-392. Interacts with GRIN3A/GluN3A (via C-terminus); this interaction competes with GIT1 interaction with ARHGEF7 and limits synaptic localization of GIT1. Interacts with IKBKG/NEMO in resting bone mesenchymal stem cells, as well as in TNF-stimulated cells; this interaction may increase IKBKG affinity for 'Lys-63'-linked polyubiquitin chains. Interacts with GABA(A) receptors, including GABRB3 and GABRG2. Interacts with SCRIB. Interacts (via N- and C-terminus) with ENTR1/SDCCAG3 (via N-terminus); this interaction is direct. May form a tripartite complex with ENTR1 and PTPN13. Interacts with YWHAZ. Interacts with PAK1 and PAK3. Directly interacts (via N-terminus) with gamma-tubulin. Interacts with MAPK1 and MAPK3; this interaction is required for MAPK1/3 recruitment to focal adhesions. In terms of processing, phosphorylated on tyrosine residues by PTK2/FAK1 and SRC in growing fibroblasts. Phosphorylation at Tyr-392 is induced by activation of Ephrin-B1/EFNB1 and catalyzed by SRC family kinases. It is required for the interaction with NCK2 and for GIT1 recruitment to synapses in hippocampal neurons. As to expression, widely expressed. Expressed at high levels in testis (at protein level). Expressed in the brain, including in CA1 hippocampal neurons, in the amygdala, and thalamic nuclei (at protein level).

It localises to the cytoplasm. The protein localises to the synapse. The protein resides in the presynapse. It is found in the postsynapse. Its subcellular location is the postsynaptic density. It localises to the cell junction. The protein localises to the focal adhesion. The protein resides in the cell projection. It is found in the lamellipodium. Its subcellular location is the cytoskeleton. It localises to the microtubule organizing center. The protein localises to the centrosome. The protein resides in the spindle pole. Its function is as follows. GTPase-activating protein for ADP ribosylation factor family members, including ARF1. Multidomain scaffold protein that interacts with numerous proteins and therefore participates in many cellular functions, including receptor internalization, focal adhesion remodeling, and signaling by both G protein-coupled receptors and tyrosine kinase receptors. Through PAK1 activation, positively regulates microtubule nucleation during interphase. Plays a role in the regulation of cytokinesis; for this function, may act in a pathway also involving ENTR1 and PTPN13. May promote cell motility both by regulating focal complex dynamics and by the activation of RAC1. May act as scaffold for MAPK1/3 signal transduction, recruiting MAPK1/3 to focal adhesions after EGF stimulation via a Src-dependent pathway, hence stimulating cell migration. Plays a role in brain development and function. Involved in the regulation of spine density and synaptic plasticity that is required for processes involved in learning. Plays an important role in dendritic spine morphogenesis and synapse formation. In hippocampal neurons, recruits guanine nucleotide exchange factors (GEFs), such as ARHGEF7/beta-PIX, to the synaptic membrane. These in turn locally activate RAC1, which is an essential step for spine morphogenesis and synapse formation. May contribute to the organization of presynaptic active zones through oligomerization and formation of a Piccolo/PCLO-based protein network, which includes ARHGEF7/beta-PIX and FAK1. In neurons, through its interaction with liprin-alpha family members, may be required for AMPA receptor (GRIA2/3) proper targeting to the cell membrane. In complex with GABA(A) receptors and ARHGEF7, plays a crucial role in regulating GABA(A) receptor synaptic stability, maintaining GPHN/gephyrin scaffolds and hence GABAergic inhibitory synaptic transmission, by locally coordinating RAC1 and PAK1 downstream effector activity, leading to F-actin stabilization. May also be important for RAC1 downstream signaling pathway through PAK3 and regulation of neuronal inhibitory transmission at presynaptic input. Required for successful bone regeneration during fracture healing. The function in intramembranous ossification may, at least partly, exerted by macrophages in which GIT1 is a key negative regulator of redox homeostasis, IL1B production, and glycolysis, acting through the ERK1/2/NRF2/NFE2L2 axis. May also play a role in angiogenesis during fracture healing. In this process, may regulate activation of the canonical NF-kappa-B signal in bone mesenchymal stem cells by enhancing the interaction between NEMO and 'Lys-63'-ubiquitinated RIPK1/RIP1, eventually leading to enhanced production of VEGFA and others angiogenic factors. Essential for VEGF signaling through the activation of phospholipase C-gamma and ERK1/2, hence may control endothelial cell proliferation and angiogenesis. This Rattus norvegicus (Rat) protein is ARF GTPase-activating protein GIT1.